Consider the following 92-residue polypeptide: N(2)-fixation sustaining protein CowN (92 aa).

It belongs to the CowN family.

Functionally, is required to sustain N(2)-dependent growth in the presence of low levels of carbon monoxide (CO). Probably acts by protecting the N(2) fixation ability of the nitrogenase complex, which is inactivated in the presence of CO. This is N(2)-fixation sustaining protein CowN from Rhodobacter capsulatus (strain ATCC BAA-309 / NBRC 16581 / SB1003).